Consider the following 374-residue polypeptide: Pectate lyase 3 (374 aa).

The first 22 residues, 1 to 22 (MKYLLPSAAAGLLLLAAQPTMA), serve as a signal peptide directing secretion. C93 and C176 are disulfide-bonded. Residues D150, D152, E187, and D191 each contribute to the Ca(2+) site. R239 is a catalytic residue. C350 and C373 are disulfide-bonded.

The protein belongs to the polysaccharide lyase 1 family. PLADES subfamily. Ca(2+) is required as a cofactor.

It localises to the secreted. The enzyme catalyses Eliminative cleavage of (1-&gt;4)-alpha-D-galacturonan to give oligosaccharides with 4-deoxy-alpha-D-galact-4-enuronosyl groups at their non-reducing ends.. It participates in glycan metabolism; pectin degradation; 2-dehydro-3-deoxy-D-gluconate from pectin: step 2/5. Functionally, involved in maceration and soft-rotting of plant tissue. The chain is Pectate lyase 3 (pel3) from Pectobacterium carotovorum subsp. carotovorum (Erwinia carotovora subsp. carotovora).